We begin with the raw amino-acid sequence, 293 residues long: Ribosomal RNA small subunit methyltransferase A (293 aa).

Residues N33, V35, G60, E81, D111, and N130 each coordinate S-adenosyl-L-methionine.

Belongs to the class I-like SAM-binding methyltransferase superfamily. rRNA adenine N(6)-methyltransferase family. RsmA subfamily.

The protein localises to the cytoplasm. The catalysed reaction is adenosine(1518)/adenosine(1519) in 16S rRNA + 4 S-adenosyl-L-methionine = N(6)-dimethyladenosine(1518)/N(6)-dimethyladenosine(1519) in 16S rRNA + 4 S-adenosyl-L-homocysteine + 4 H(+). Its function is as follows. Specifically dimethylates two adjacent adenosines (A1518 and A1519) in the loop of a conserved hairpin near the 3'-end of 16S rRNA in the 30S particle. May play a critical role in biogenesis of 30S subunits. The chain is Ribosomal RNA small subunit methyltransferase A from Corynebacterium glutamicum (strain R).